A 367-amino-acid polypeptide reads, in one-letter code: Anthranilate phosphoribosyltransferase (367 aa).

5-phospho-alpha-D-ribose 1-diphosphate-binding positions include glycine 105, 108-109 (GD), threonine 113, 115-118 (NIST), 133-141 (KHGNRAASS), and glycine 145. Glycine 105 is an anthranilate binding site. Serine 117 contacts Mg(2+). Residue asparagine 136 coordinates anthranilate. Arginine 191 contributes to the anthranilate binding site. Mg(2+) is bound by residues aspartate 249 and glutamate 250.

The protein belongs to the anthranilate phosphoribosyltransferase family. Homodimer. Mg(2+) is required as a cofactor.

The enzyme catalyses N-(5-phospho-beta-D-ribosyl)anthranilate + diphosphate = 5-phospho-alpha-D-ribose 1-diphosphate + anthranilate. It functions in the pathway amino-acid biosynthesis; L-tryptophan biosynthesis; L-tryptophan from chorismate: step 2/5. Functionally, catalyzes the transfer of the phosphoribosyl group of 5-phosphorylribose-1-pyrophosphate (PRPP) to anthranilate to yield N-(5'-phosphoribosyl)-anthranilate (PRA). This chain is Anthranilate phosphoribosyltransferase, found in Corynebacterium jeikeium (strain K411).